Consider the following 321-residue polypeptide: Phospho-N-acetylmuramoyl-pentapeptide-transferase (321 aa).

The next 10 membrane-spanning stretches (helical) occupy residues 6 to 26, 54 to 74, 77 to 97, 117 to 137, 143 to 163, 175 to 195, 200 to 220, 226 to 246, 251 to 271, and 301 to 321; these read IFIP…LFIG, MGGV…GLFF, FTPS…LGYL, LIGQ…EGFS, FGVA…FWLV, IDGL…IIAW, FDVV…FPYN, IFMG…ISII, WTLL…ILQV, and IDFV…WILF.

The protein belongs to the glycosyltransferase 4 family. MraY subfamily. The cofactor is Mg(2+).

The protein localises to the cell membrane. The catalysed reaction is UDP-N-acetyl-alpha-D-muramoyl-L-alanyl-gamma-D-glutamyl-L-lysyl-D-alanyl-D-alanine + di-trans,octa-cis-undecaprenyl phosphate = Mur2Ac(oyl-L-Ala-gamma-D-Glu-L-Lys-D-Ala-D-Ala)-di-trans,octa-cis-undecaprenyl diphosphate + UMP. Its pathway is cell wall biogenesis; peptidoglycan biosynthesis. Its function is as follows. Catalyzes the initial step of the lipid cycle reactions in the biosynthesis of the cell wall peptidoglycan: transfers peptidoglycan precursor phospho-MurNAc-pentapeptide from UDP-MurNAc-pentapeptide onto the lipid carrier undecaprenyl phosphate, yielding undecaprenyl-pyrophosphoryl-MurNAc-pentapeptide, known as lipid I. The protein is Phospho-N-acetylmuramoyl-pentapeptide-transferase of Enterococcus faecalis (strain ATCC 700802 / V583).